The following is a 177-amino-acid chain: ATP synthase subunit b (177 aa).

The helical transmembrane segment at 19–39 threads the bilayer; it reads LFPNLPNFIAHVIATIVLVVI.

Belongs to the ATPase B chain family. As to quaternary structure, F-type ATPases have 2 components, F(1) - the catalytic core - and F(0) - the membrane proton channel. F(1) has five subunits: alpha(3), beta(3), gamma(1), delta(1), epsilon(1). F(0) has three main subunits: a(1), b(2) and c(10-14). The alpha and beta chains form an alternating ring which encloses part of the gamma chain. F(1) is attached to F(0) by a central stalk formed by the gamma and epsilon chains, while a peripheral stalk is formed by the delta and b chains.

The protein resides in the cell membrane. Functionally, f(1)F(0) ATP synthase produces ATP from ADP in the presence of a proton or sodium gradient. F-type ATPases consist of two structural domains, F(1) containing the extramembraneous catalytic core and F(0) containing the membrane proton channel, linked together by a central stalk and a peripheral stalk. During catalysis, ATP synthesis in the catalytic domain of F(1) is coupled via a rotary mechanism of the central stalk subunits to proton translocation. In terms of biological role, component of the F(0) channel, it forms part of the peripheral stalk, linking F(1) to F(0). The polypeptide is ATP synthase subunit b (Mesoplasma florum (strain ATCC 33453 / NBRC 100688 / NCTC 11704 / L1) (Acholeplasma florum)).